The sequence spans 1342 residues: DNA-directed RNA polymerase subunit beta (1342 aa).

Belongs to the RNA polymerase beta chain family. The RNAP catalytic core consists of 2 alpha, 1 beta, 1 beta' and 1 omega subunit. When a sigma factor is associated with the core the holoenzyme is formed, which can initiate transcription.

The enzyme catalyses RNA(n) + a ribonucleoside 5'-triphosphate = RNA(n+1) + diphosphate. DNA-dependent RNA polymerase catalyzes the transcription of DNA into RNA using the four ribonucleoside triphosphates as substrates. This is DNA-directed RNA polymerase subunit beta from Proteus mirabilis (strain HI4320).